The chain runs to 748 residues: Phosphoribosylformylglycinamidine synthase subunit PurL (748 aa).

Residue His-47 is part of the active site. 2 residues coordinate ATP: Tyr-50 and Lys-90. Glu-92 contributes to the Mg(2+) binding site. Residues 93 to 96 (SHNH) and Arg-115 each bind substrate. The active-site Proton acceptor is the His-94. Asp-116 serves as a coordination point for Mg(2+). Residue Gln-240 participates in substrate binding. Asp-268 contributes to the Mg(2+) binding site. 312-314 (ESQ) provides a ligand contact to substrate. ATP contacts are provided by Asn-500 and Gly-537. Asn-538 provides a ligand contact to Mg(2+). Substrate is bound at residue Ser-540.

Belongs to the FGAMS family. In terms of assembly, monomer. Part of the FGAM synthase complex composed of 1 PurL, 1 PurQ and 2 PurS subunits.

The protein localises to the cytoplasm. The enzyme catalyses N(2)-formyl-N(1)-(5-phospho-beta-D-ribosyl)glycinamide + L-glutamine + ATP + H2O = 2-formamido-N(1)-(5-O-phospho-beta-D-ribosyl)acetamidine + L-glutamate + ADP + phosphate + H(+). It functions in the pathway purine metabolism; IMP biosynthesis via de novo pathway; 5-amino-1-(5-phospho-D-ribosyl)imidazole from N(2)-formyl-N(1)-(5-phospho-D-ribosyl)glycinamide: step 1/2. Part of the phosphoribosylformylglycinamidine synthase complex involved in the purines biosynthetic pathway. Catalyzes the ATP-dependent conversion of formylglycinamide ribonucleotide (FGAR) and glutamine to yield formylglycinamidine ribonucleotide (FGAM) and glutamate. The FGAM synthase complex is composed of three subunits. PurQ produces an ammonia molecule by converting glutamine to glutamate. PurL transfers the ammonia molecule to FGAR to form FGAM in an ATP-dependent manner. PurS interacts with PurQ and PurL and is thought to assist in the transfer of the ammonia molecule from PurQ to PurL. This Leptospira biflexa serovar Patoc (strain Patoc 1 / Ames) protein is Phosphoribosylformylglycinamidine synthase subunit PurL.